We begin with the raw amino-acid sequence, 276 residues long: Glutamate 5-kinase (276 aa).

K14 contacts ATP. Residues S54, D141, and N157 each contribute to the substrate site. Residues 177–178 (SD) and 219–225 (TGGMLTK) each bind ATP.

This sequence belongs to the glutamate 5-kinase family.

The protein localises to the cytoplasm. The catalysed reaction is L-glutamate + ATP = L-glutamyl 5-phosphate + ADP. Its pathway is amino-acid biosynthesis; L-proline biosynthesis; L-glutamate 5-semialdehyde from L-glutamate: step 1/2. Functionally, catalyzes the transfer of a phosphate group to glutamate to form L-glutamate 5-phosphate. The sequence is that of Glutamate 5-kinase from Listeria monocytogenes serotype 4b (strain CLIP80459).